The chain runs to 292 residues: uncharacterized protein (292 aa).

A helical membrane pass occupies residues 66–86 (LFFYLLFWWTYLTIVVLLTVP).

Its subcellular location is the host membrane. This is an uncharacterized protein from Alcelaphine herpesvirus 1 (strain C500) (AlHV-1).